A 315-amino-acid polypeptide reads, in one-letter code: FGFR1 oncogene partner 2 homolog (315 aa).

Coiled-coil stretches lie at residues 32–99 (EEAE…RAME) and 156–183 (VVQR…ISKQ). Disordered regions lie at residues 201-222 (KAVQ…SGAS) and 238-315 (PEQP…APAT). Polar residues predominate over residues 246–269 (GTTNSFNTAPVHSQSETQAPSVTL).

Belongs to the SIKE family.

This is FGFR1 oncogene partner 2 homolog from Drosophila melanogaster (Fruit fly).